The chain runs to 105 residues: Integration host factor (105 aa).

The H2TH motif, binds DNA signature appears at 64–71 (LPKVGKVK). The tract at residues 82–94 (APTRRLRGLGDRQ) is lid, binds DNA.

This sequence belongs to the actinobacterial IHF (aIHF) family. In terms of assembly, homodimer in solution. Binds DNA as a monomer.

It is found in the cytoplasm. Functionally, a nucleoid-associated protein (NAP) required for septum formation and normal cell division as well as for DNA segregation. Binds about 135 sites across the chromosome, most of which are genes involved in virulence; most DNA-binding sites are immediately upstream of transcription start sites. When mIHF is depleted most of the genes are down-regulated. Binds supercoiled and linear dsDNA in a concentration-dependent manner, probably non-sequence specifically. Binding compacts DNA, protecting it from degradation. Initial binding to supercoiled DNA opens it fully, followed by bending and compaction. Bends and thus compacts linear DNA. Binds DNA via 2 sites, forms left-handed loops on linear DNA; at low concentrations unwinds larger cosmids (42.6 kb) then collapses and condenses DNA as protein levels rise. Forms mostly left-handed loops on condensing cosmid DNA. The protein is Integration host factor of Mycobacterium tuberculosis (strain ATCC 25618 / H37Rv).